Consider the following 889-residue polypeptide: Exocyst complex component 1 (889 aa).

Ser-145 and Ser-148 each carry phosphoserine. Positions 156 to 269 form a coiled coil; that stretch reads RAVQKTQHMD…GHVKETMEKI (114 aa). A Phosphoserine modification is found at Ser-456.

Belongs to the SEC3 family. As to quaternary structure, the exocyst complex is composed of Sec3/Exoc1, Sec5/Exoc2, Sec6/Exoc3, Sec8/Exoc4, Sec10/Exoc5, Sec15/Exoc6, Exo70/Exoc7 and Exo84/Exoc8.

Its function is as follows. Component of the exocyst complex involved in the docking of exocytic vesicles with fusion sites on the plasma membrane. The sequence is that of Exocyst complex component 1 from Drosophila melanogaster (Fruit fly).